Consider the following 345-residue polypeptide: Heat-inducible transcription repressor HrcA (345 aa).

It belongs to the HrcA family.

Negative regulator of class I heat shock genes (grpE-dnaK-dnaJ and groELS operons). Prevents heat-shock induction of these operons. This Lachnoclostridium phytofermentans (strain ATCC 700394 / DSM 18823 / ISDg) (Clostridium phytofermentans) protein is Heat-inducible transcription repressor HrcA.